The sequence spans 448 residues: Nuclear distribution protein PAC1 (448 aa).

Positions 9 to 41 (QAEELHKSIIAYLAANNFQDSVTAMRTELNLGE) constitute a LisH domain. A disordered region spans residues 74-95 (SATPTSLSNRKQDPASWLPAGP). WD repeat units lie at residues 102–143 (SHRT…RTVK), 145–185 (HTKA…KNIR), 189–236 (GHDH…CLKT), 239–278 (GHSD…PETK), 283–343 (GHEH…IKTL), 345–384 (GHDN…KCVK), and 389–444 (MHEH…TSLR).

Belongs to the WD repeat LIS1/nudF family. As to quaternary structure, self-associates. Interacts with NDL1 and dynein.

It is found in the cytoplasm. The protein localises to the cytoskeleton. The protein resides in the spindle pole. In terms of biological role, positively regulates the activity of the minus-end directed microtubule motor protein dynein. May enhance dynein-mediated microtubule sliding by targeting dynein to the microtubule plus end. Required for nuclear migration during vegetative growth as well as development. Required for retrograde early endosome (EE) transport from the hyphal tip. Required for localization of dynein to the mitotic spindle poles. Recruits additional proteins to the dynein complex at SPBs. In Fusarium vanettenii (strain ATCC MYA-4622 / CBS 123669 / FGSC 9596 / NRRL 45880 / 77-13-4) (Fusarium solani subsp. pisi), this protein is Nuclear distribution protein PAC1.